A 109-amino-acid chain; its full sequence is Tetraspanin-31 (109 aa).

Topologically, residues 1–12 (MVCGGFACSKNA) are cytoplasmic. A helical membrane pass occupies residues 13–33 (LCALNVVYMLVGLLLIGVAAW). Residues 34–44 (AKGLGLVSSIH) are Extracellular-facing. Residues 45–65 (IIGGVIAVGVFLLLIAVAGLV) form a helical membrane-spanning segment. At 66-72 (GAVNHHQ) the chain is on the cytoplasmic side. Residues 73 to 93 (VLLFFYMIILGLVFIFQFGIS) form a helical membrane-spanning segment. At 94-109 (CSCLAINLSKQAGIIN) the chain is on the extracellular side. N-linked (GlcNAc...) asparagine glycosylation is present at N100.

Belongs to the tetraspanin (TM4SF) family.

It is found in the membrane. The chain is Tetraspanin-31 (TSPAN31) from Sus scrofa (Pig).